Reading from the N-terminus, the 416-residue chain is Hemagglutinin-esterase (416 aa).

The N-terminal stretch at 1-14 (MLSLILFFPSFAFA) is a signal peptide. Positions 4–121 (LILFFPSFAF…GVDSYMELKT (118 aa)) are esterase domain first part. The Virion surface segment spans residues 15–393 (VTPVTPYFGP…ESVDVISSSY (379 aa)). The active-site Nucleophile is Ser37. An intrachain disulfide couples Cys41 to Cys57. Asn59 and Asn76 each carry an N-linked (GlcNAc...) asparagine; by host glycan. Cystine bridges form between Cys88-Cys136, Cys108-Cys156, Cys192-Cys273, Cys200-Cys246, and Cys206-Cys213. The receptor binding stretch occupies residues 122-263 (SFNIKLNQMA…GTHNASIVGN (142 aa)). Residues Asn257, Asn278, and Asn294 are each glycosylated (N-linked (GlcNAc...) asparagine; by host). Residues 264–379 (FLFYPTKSYC…SCPQYVKLFD (116 aa)) are esterase domain second part. A disulfide bridge links Cys304 with Cys309. Residue Asn322 is glycosylated (N-linked (GlcNAc...) asparagine; by host). The active-site Charge relay system is His328. An N-linked (GlcNAc...) asparagine; by host glycan is attached at Asn343. Cys346 and Cys371 are joined by a disulfide. A helical membrane pass occupies residues 394 to 414 (FVATWVLLVVVVILIFVIISF). Over 415-416 (FC) the chain is Intravirion.

The protein belongs to the influenza type C/coronaviruses hemagglutinin-esterase family. As to quaternary structure, homodimer. In terms of processing, N-glycosylated.

The protein resides in the virion membrane. The protein localises to the host cell membrane. The enzyme catalyses N-acetyl-9-O-acetylneuraminate + H2O = N-acetylneuraminate + acetate + H(+). It carries out the reaction N-acetyl-4-O-acetylneuraminate + H2O = N-acetylneuraminate + acetate + H(+). Structural protein that makes short spikes at the surface of the virus. Contains receptor binding and receptor-destroying activities. Mediates de-O-acetylation of N-acetyl-9-O-acetylneuraminic acid, which is probably the receptor determinant recognized by the virus on the surface of erythrocytes and susceptible cells. This receptor-destroying activity is important for virus release as it probably helps preventing self-aggregation and ensures the efficient spread of the progeny virus from cell to cell. May serve as a secondary viral attachment protein for initiating infection, the spike protein being the major one. Seems to be a 'luxury' protein that is not absolutely necessary for virus infection in culture. However, its presence in the virus may alter its pathogenicity. May become a target for both the humoral and the cellular branches of the immune system. The polypeptide is Hemagglutinin-esterase (HE) (Homo sapiens (Human)).